Here is a 370-residue protein sequence, read N- to C-terminus: 3-dehydroquinate synthase (370 aa).

Residues 112 to 116, 136 to 137, K149, K158, and 176 to 179 contribute to the NAD(+) site; these read GVIGD, TT, and TLKT. Positions 191, 256, and 273 each coordinate Zn(2+).

It belongs to the sugar phosphate cyclases superfamily. Dehydroquinate synthase family. It depends on Co(2+) as a cofactor. Requires Zn(2+) as cofactor. The cofactor is NAD(+).

It is found in the cytoplasm. The enzyme catalyses 7-phospho-2-dehydro-3-deoxy-D-arabino-heptonate = 3-dehydroquinate + phosphate. The protein operates within metabolic intermediate biosynthesis; chorismate biosynthesis; chorismate from D-erythrose 4-phosphate and phosphoenolpyruvate: step 2/7. Functionally, catalyzes the conversion of 3-deoxy-D-arabino-heptulosonate 7-phosphate (DAHP) to dehydroquinate (DHQ). The chain is 3-dehydroquinate synthase from Prochlorococcus marinus (strain MIT 9211).